The primary structure comprises 640 residues: 1-deoxy-D-xylulose-5-phosphate synthase (640 aa).

Residues H78 and 119-121 (GHS) each bind thiamine diphosphate. D151 contacts Mg(2+). Residues 152–153 (GA), N180, Y289, and E371 contribute to the thiamine diphosphate site. N180 provides a ligand contact to Mg(2+).

It belongs to the transketolase family. DXPS subfamily. As to quaternary structure, homodimer. Mg(2+) serves as cofactor. The cofactor is thiamine diphosphate.

It catalyses the reaction D-glyceraldehyde 3-phosphate + pyruvate + H(+) = 1-deoxy-D-xylulose 5-phosphate + CO2. The protein operates within metabolic intermediate biosynthesis; 1-deoxy-D-xylulose 5-phosphate biosynthesis; 1-deoxy-D-xylulose 5-phosphate from D-glyceraldehyde 3-phosphate and pyruvate: step 1/1. Its function is as follows. Catalyzes the acyloin condensation reaction between C atoms 2 and 3 of pyruvate and glyceraldehyde 3-phosphate to yield 1-deoxy-D-xylulose-5-phosphate (DXP). This Bartonella henselae (strain ATCC 49882 / DSM 28221 / CCUG 30454 / Houston 1) (Rochalimaea henselae) protein is 1-deoxy-D-xylulose-5-phosphate synthase.